Here is a 259-residue protein sequence, read N- to C-terminus: TCF3 fusion partner homolog (259 aa).

Disordered stretches follow at residues 51–72 (GLGD…GRRR) and 141–210 (EDDG…APVQ). A Phosphoserine modification is found at Ser167. Thr172 carries the post-translational modification Phosphothreonine. Phosphoserine is present on residues Ser180 and Ser188. A Phosphothreonine modification is found at Thr203. Lys222 participates in a covalent cross-link: Glycyl lysine isopeptide (Lys-Gly) (interchain with G-Cter in SUMO2). A disordered region spans residues 240–259 (VSRGPDKLLPYPTLASPPFD). Ser255 is modified (phosphoserine).

As to quaternary structure, interacts with NOL3; translocates NOL3 into the nucleus and negatively regulated TFPT-induced cell death. Component of the chromatin remodeling INO80 complex; specifically part of a complex module associated with the N-terminus of INO80. In terms of tissue distribution, ubiquitously expressed. Abundant in the brain.

Its subcellular location is the nucleus. Functionally, appears to promote apoptosis in a p53/TP53-independent manner. Its function is as follows. Putative regulatory component of the chromatin remodeling INO80 complex which is involved in transcriptional regulation, DNA replication and probably DNA repair. The sequence is that of TCF3 fusion partner homolog (Tfpt) from Rattus norvegicus (Rat).